The chain runs to 185 residues: Adenine phosphoribosyltransferase (185 aa).

It belongs to the purine/pyrimidine phosphoribosyltransferase family. Homodimer.

The protein localises to the cytoplasm. It carries out the reaction AMP + diphosphate = 5-phospho-alpha-D-ribose 1-diphosphate + adenine. It functions in the pathway purine metabolism; AMP biosynthesis via salvage pathway; AMP from adenine: step 1/1. In terms of biological role, catalyzes a salvage reaction resulting in the formation of AMP, that is energically less costly than de novo synthesis. The chain is Adenine phosphoribosyltransferase from Pectobacterium carotovorum subsp. carotovorum (strain PC1).